Here is a 205-residue protein sequence, read N- to C-terminus: Probable GTP-binding protein EngB (205 aa).

An EngB-type G domain is found at 29 to 203 (QGAEIAFIGR…KAVLSQWFRS (175 aa)). Residues 37–44 (GRSNAGKS), 64–68 (GRTQM), 82–85 (DLPG), 149–152 (TKSD), and 182–184 (FSS) each bind GTP. The Mg(2+) site is built by S44 and T66.

The protein belongs to the TRAFAC class TrmE-Era-EngA-EngB-Septin-like GTPase superfamily. EngB GTPase family. Mg(2+) serves as cofactor.

Its function is as follows. Necessary for normal cell division and for the maintenance of normal septation. In Coxiella burnetii (strain RSA 331 / Henzerling II), this protein is Probable GTP-binding protein EngB.